The chain runs to 66 residues: DNA-directed RNA polymerase subunit omega (66 aa).

This sequence belongs to the RNA polymerase subunit omega family. The RNAP catalytic core consists of 2 alpha, 1 beta, 1 beta' and 1 omega subunit. When a sigma factor is associated with the core the holoenzyme is formed, which can initiate transcription.

It carries out the reaction RNA(n) + a ribonucleoside 5'-triphosphate = RNA(n+1) + diphosphate. Its function is as follows. Promotes RNA polymerase assembly. Latches the N- and C-terminal regions of the beta' subunit thereby facilitating its interaction with the beta and alpha subunits. This chain is DNA-directed RNA polymerase subunit omega, found in Bacillus licheniformis (strain ATCC 14580 / DSM 13 / JCM 2505 / CCUG 7422 / NBRC 12200 / NCIMB 9375 / NCTC 10341 / NRRL NRS-1264 / Gibson 46).